The chain runs to 475 residues: Ribulose bisphosphate carboxylase large chain (475 aa).

Residues 1 to 2 constitute a propeptide that is removed on maturation; sequence MS. P3 carries the post-translational modification N-acetylproline. K14 is modified (N6,N6,N6-trimethyllysine). 2 residues coordinate substrate: N123 and T173. The active-site Proton acceptor is K175. K177 contributes to the substrate binding site. Residues K201, D203, and E204 each contribute to the Mg(2+) site. Residue K201 is modified to N6-carboxylysine. Catalysis depends on H294, which acts as the Proton acceptor. Positions 295, 327, and 379 each coordinate substrate.

This sequence belongs to the RuBisCO large chain family. Type I subfamily. As to quaternary structure, heterohexadecamer of 8 large chains and 8 small chains; disulfide-linked. The disulfide link is formed within the large subunit homodimers. Requires Mg(2+) as cofactor. Post-translationally, the disulfide bond which can form in the large chain dimeric partners within the hexadecamer appears to be associated with oxidative stress and protein turnover.

It is found in the plastid. Its subcellular location is the chloroplast. The catalysed reaction is 2 (2R)-3-phosphoglycerate + 2 H(+) = D-ribulose 1,5-bisphosphate + CO2 + H2O. It catalyses the reaction D-ribulose 1,5-bisphosphate + O2 = 2-phosphoglycolate + (2R)-3-phosphoglycerate + 2 H(+). Functionally, ruBisCO catalyzes two reactions: the carboxylation of D-ribulose 1,5-bisphosphate, the primary event in carbon dioxide fixation, as well as the oxidative fragmentation of the pentose substrate in the photorespiration process. Both reactions occur simultaneously and in competition at the same active site. The sequence is that of Ribulose bisphosphate carboxylase large chain from Notothixos subaureus (Golden mistletoe).